The sequence spans 332 residues: Glycerol-3-phosphate dehydrogenase [NAD(P)+] 2 (332 aa).

Positions 17, 18, 37, and 112 each coordinate NADPH. Sn-glycerol 3-phosphate contacts are provided by Lys-112 and Gly-140. Residue Ala-144 coordinates NADPH. Sn-glycerol 3-phosphate contacts are provided by Lys-195, Asp-243, Ser-253, Arg-254, and Asn-255. Lys-195 functions as the Proton acceptor in the catalytic mechanism. Arg-254 serves as a coordination point for NADPH. Residues Val-278 and Glu-280 each coordinate NADPH.

The protein belongs to the NAD-dependent glycerol-3-phosphate dehydrogenase family.

Its subcellular location is the cytoplasm. It catalyses the reaction sn-glycerol 3-phosphate + NAD(+) = dihydroxyacetone phosphate + NADH + H(+). The enzyme catalyses sn-glycerol 3-phosphate + NADP(+) = dihydroxyacetone phosphate + NADPH + H(+). It participates in membrane lipid metabolism; glycerophospholipid metabolism. Catalyzes the reduction of the glycolytic intermediate dihydroxyacetone phosphate (DHAP) to sn-glycerol 3-phosphate (G3P), the key precursor for phospholipid synthesis. The chain is Glycerol-3-phosphate dehydrogenase [NAD(P)+] 2 from Mycolicibacterium paratuberculosis (strain ATCC BAA-968 / K-10) (Mycobacterium paratuberculosis).